The chain runs to 54 residues: Gene product 16.6 (54 aa).

This sequence belongs to the phi29likevirus gp16.6 family.

The sequence is that of Gene product 16.6 (16.6) from Bacillus phage phi29 (Bacteriophage phi-29).